Consider the following 678-residue polypeptide: DNA mismatch repair protein MutL (678 aa).

This sequence belongs to the DNA mismatch repair MutL/HexB family.

Its function is as follows. This protein is involved in the repair of mismatches in DNA. It is required for dam-dependent methyl-directed DNA mismatch repair. May act as a 'molecular matchmaker', a protein that promotes the formation of a stable complex between two or more DNA-binding proteins in an ATP-dependent manner without itself being part of a final effector complex. The protein is DNA mismatch repair protein MutL of Lactiplantibacillus plantarum (strain ATCC BAA-793 / NCIMB 8826 / WCFS1) (Lactobacillus plantarum).